The following is a 473-amino-acid chain: Cyprosin (473 aa).

Positions 1-33 are cleaved as a propeptide — activation peptide; it reads LKKRKVNILNHPGEHAGSNDANARRKYGVRGNF. The 420-residue stretch at 51–470 folds into the Peptidase A1 domain; it reads YFGEIGIGTP…DYGNLRVGFA (420 aa). Aspartate 69 is an active-site residue. 2 cysteine pairs are disulfide-bonded: cysteine 82-cysteine 88 and cysteine 247-cysteine 251. Aspartate 256 is a catalytic residue. The 104-residue stretch at 281–384 folds into the Saposin B-type domain; it reads VMSQQCKSLV…DKLCERLPSP (104 aa). Cystine bridges form between cysteine 286–cysteine 378, cysteine 311–cysteine 350, cysteine 317–cysteine 347, and cysteine 392–cysteine 429. An N-linked (GlcNAc...) asparagine glycan is attached at asparagine 364.

It belongs to the peptidase A1 family. In terms of tissue distribution, mostly present in the violet parts of styles and corollas of mature flowers.

The chain is Cyprosin (CYPRO1) from Cynara cardunculus (Cardoon).